Reading from the N-terminus, the 147-residue chain is Large ribosomal subunit protein bL9 (147 aa).

This sequence belongs to the bacterial ribosomal protein bL9 family.

Functionally, binds to the 23S rRNA. This Halothermothrix orenii (strain H 168 / OCM 544 / DSM 9562) protein is Large ribosomal subunit protein bL9.